Reading from the N-terminus, the 275-residue chain is Rhamnulose-1-phosphate aldolase (275 aa).

Glutamate 117 is an active-site residue. 3 residues coordinate Zn(2+): histidine 141, histidine 143, and histidine 212.

It belongs to the aldolase class II family. RhaD subfamily. In terms of assembly, homotetramer. Zn(2+) is required as a cofactor.

The protein resides in the cytoplasm. The catalysed reaction is L-rhamnulose 1-phosphate = (S)-lactaldehyde + dihydroxyacetone phosphate. It participates in carbohydrate degradation; L-rhamnose degradation; glycerone phosphate from L-rhamnose: step 3/3. Its function is as follows. Catalyzes the reversible cleavage of L-rhamnulose-1-phosphate to dihydroxyacetone phosphate (DHAP) and L-lactaldehyde. This is Rhamnulose-1-phosphate aldolase from Salmonella choleraesuis (strain SC-B67).